We begin with the raw amino-acid sequence, 108 residues long: Histone H4 (108 aa).

The segment at 1–36 (MSSAQSRGGKTGGKVGGKVGAKRHKKTQKEHINGIT) is disordered. Gly residues predominate over residues 9 to 19 (GKTGGKVGGKV).

Belongs to the histone H4 family. As to quaternary structure, the nucleosome is a histone octamer containing two molecules each of H2A, H2B, H3 and H4 assembled in one H3-H4 heterotetramer and two H2A-H2B heterodimers. The octamer wraps approximately 147 bp of DNA.

Its subcellular location is the nucleus. The protein localises to the chromosome. Functionally, core component of nucleosome. Nucleosomes wrap and compact DNA into chromatin, limiting DNA accessibility to the cellular machineries which require DNA as a template. Histones thereby play a central role in transcription regulation, DNA repair, DNA replication and chromosomal stability. DNA accessibility is regulated via a complex set of post-translational modifications of histones, also called histone code, and nucleosome remodeling. This is Histone H4 (H4a) from Dictyostelium discoideum (Social amoeba).